The following is a 273-amino-acid chain: DnaJ homolog subfamily C member 27 (273 aa).

Residues 1–18 (MEASMPKRKEPGKSLRIK) are required for interaction with MAPK1. GTP-binding positions include 23 to 30 (GNAEVGKS), 71 to 75 (DMAGD), and 134 to 137 (NKID). The J domain maps to 217–273 (DSWDMLGVKPGASRDEVNKAYRKLAVLLHPDKCVAPGSEDAFKAVVNARTALLKNIK).

This sequence belongs to the small GTPase superfamily. Rab family. Interacts directly with MAPK1 (wild-type and kinase-deficient forms). Interacts directly (in GTP-bound form) with MAP2K1 (wild-type and kinase-deficient forms).

Its subcellular location is the nucleus. GTPase which can activate the MEK/ERK pathway and induce cell transformation when overexpressed. May act as a nuclear scaffold for MAPK1, probably by association with MAPK1 nuclear export signal leading to enhanced ERK1/ERK2 signaling. This Bos taurus (Bovine) protein is DnaJ homolog subfamily C member 27 (DNAJC27).